The following is a 430-amino-acid chain: 3-phosphoshikimate 1-carboxyvinyltransferase (430 aa).

The 3-phosphoshikimate site is built by K25, S26, and R30. A phosphoenolpyruvate-binding site is contributed by K25. G98 and R126 together coordinate phosphoenolpyruvate. 3-phosphoshikimate-binding residues include S169, S170, Q171, S198, E313, and H342. Q171 is a phosphoenolpyruvate binding site. The Proton acceptor role is filled by E313. Phosphoenolpyruvate contacts are provided by R346, R387, and K412.

The protein belongs to the EPSP synthase family. Monomer.

It is found in the cytoplasm. It catalyses the reaction 3-phosphoshikimate + phosphoenolpyruvate = 5-O-(1-carboxyvinyl)-3-phosphoshikimate + phosphate. It participates in metabolic intermediate biosynthesis; chorismate biosynthesis; chorismate from D-erythrose 4-phosphate and phosphoenolpyruvate: step 6/7. Its function is as follows. Catalyzes the transfer of the enolpyruvyl moiety of phosphoenolpyruvate (PEP) to the 5-hydroxyl of shikimate-3-phosphate (S3P) to produce enolpyruvyl shikimate-3-phosphate and inorganic phosphate. This chain is 3-phosphoshikimate 1-carboxyvinyltransferase, found in Mycobacterium leprae (strain TN).